The primary structure comprises 458 residues: Argininosuccinate lyase (458 aa).

The protein belongs to the lyase 1 family. Argininosuccinate lyase subfamily.

It is found in the cytoplasm. It catalyses the reaction 2-(N(omega)-L-arginino)succinate = fumarate + L-arginine. The protein operates within amino-acid biosynthesis; L-arginine biosynthesis; L-arginine from L-ornithine and carbamoyl phosphate: step 3/3. The chain is Argininosuccinate lyase from Salmonella paratyphi A (strain ATCC 9150 / SARB42).